Consider the following 131-residue polypeptide: NADPH-dependent 7-cyano-7-deazaguanine reductase (131 aa).

Residue Cys-41 is the Thioimide intermediate of the active site. The active-site Proton donor is Asp-48. Residues 63–65 (VEL) and 82–83 (HE) contribute to the substrate site.

This sequence belongs to the GTP cyclohydrolase I family. QueF type 1 subfamily.

It localises to the cytoplasm. It carries out the reaction 7-aminomethyl-7-carbaguanine + 2 NADP(+) = 7-cyano-7-deazaguanine + 2 NADPH + 3 H(+). The protein operates within tRNA modification; tRNA-queuosine biosynthesis. Catalyzes the NADPH-dependent reduction of 7-cyano-7-deazaguanine (preQ0) to 7-aminomethyl-7-deazaguanine (preQ1). This chain is NADPH-dependent 7-cyano-7-deazaguanine reductase, found in Nitratiruptor sp. (strain SB155-2).